The sequence spans 140 residues: Chorion class A protein Ld2/Ld41 (140 aa).

The N-terminal stretch at 1 to 21 is a signal peptide; sequence MNSFAFLLVCIQACLVQSVFS.

The protein belongs to the chorion protein family.

This protein is one of many from the eggshell of the gypsy moth. This is Chorion class A protein Ld2/Ld41 from Lymantria dispar (Gypsy moth).